The following is a 473-amino-acid chain: Siroheme synthase (473 aa).

A precorrin-2 dehydrogenase /sirohydrochlorin ferrochelatase region spans residues 1 to 206 (MDYLPIFMKI…GNTGEAEALL (206 aa)). NAD(+)-binding positions include 22-23 (TV) and 43-44 (PK). The interval 223–473 (GEVYIIGAGP…KSLLDDRVPA (251 aa)) is uroporphyrinogen-III C-methyltransferase. Proline 232 serves as a coordination point for S-adenosyl-L-methionine. Residue aspartate 255 is the Proton acceptor of the active site. Lysine 277 acts as the Proton donor in catalysis. Residues 308-310 (GGD), isoleucine 313, 338-339 (TA), methionine 390, and glycine 419 each bind S-adenosyl-L-methionine.

This sequence in the N-terminal section; belongs to the precorrin-2 dehydrogenase / sirohydrochlorin ferrochelatase family. It in the C-terminal section; belongs to the precorrin methyltransferase family.

The catalysed reaction is uroporphyrinogen III + 2 S-adenosyl-L-methionine = precorrin-2 + 2 S-adenosyl-L-homocysteine + H(+). It catalyses the reaction precorrin-2 + NAD(+) = sirohydrochlorin + NADH + 2 H(+). The enzyme catalyses siroheme + 2 H(+) = sirohydrochlorin + Fe(2+). It functions in the pathway cofactor biosynthesis; adenosylcobalamin biosynthesis; precorrin-2 from uroporphyrinogen III: step 1/1. It participates in cofactor biosynthesis; adenosylcobalamin biosynthesis; sirohydrochlorin from precorrin-2: step 1/1. Its pathway is porphyrin-containing compound metabolism; siroheme biosynthesis; precorrin-2 from uroporphyrinogen III: step 1/1. The protein operates within porphyrin-containing compound metabolism; siroheme biosynthesis; siroheme from sirohydrochlorin: step 1/1. It functions in the pathway porphyrin-containing compound metabolism; siroheme biosynthesis; sirohydrochlorin from precorrin-2: step 1/1. In terms of biological role, multifunctional enzyme that catalyzes the SAM-dependent methylations of uroporphyrinogen III at position C-2 and C-7 to form precorrin-2 via precorrin-1. Then it catalyzes the NAD-dependent ring dehydrogenation of precorrin-2 to yield sirohydrochlorin. Finally, it catalyzes the ferrochelation of sirohydrochlorin to yield siroheme. The sequence is that of Siroheme synthase from Hydrogenovibrio crunogenus (strain DSM 25203 / XCL-2) (Thiomicrospira crunogena).